The following is a 262-amino-acid chain: Bacteriorhodopsin (262 aa).

A propeptide spanning residues 1 to 13 is cleaved from the precursor; that stretch reads MLELLPTAVEGVS. The residue at position 14 (Gln14) is a Pyrrolidone carboxylic acid. At 14–22 the chain is on the extracellular side; sequence QAQITGRPE. A helical transmembrane segment spans residues 23-42; that stretch reads WIWLALGTALMGLGTLYFLV. The Cytoplasmic segment spans residues 43–56; the sequence is KGMGVSDPDAKKFY. A helical membrane pass occupies residues 57–75; it reads AITTLVPAIAFTMYLSMLL. The Extracellular segment spans residues 76–92; it reads GYGLTMVPFGGEQNPIY. Residues 93 to 109 form a helical membrane-spanning segment; the sequence is WARYADWLFTTPLLLLD. Residues 110–120 are Cytoplasmic-facing; sequence LALLVDADQGT. A helical membrane pass occupies residues 121–140; that stretch reads ILALVGADGIMIGTGLVGAL. Residues 141–147 are Extracellular-facing; it reads TKVYSYR. The helical transmembrane segment at 148–167 threads the bilayer; sequence FVWWAISTAAMLYILYVLFF. Residues 168–185 are Cytoplasmic-facing; that stretch reads GFTSKAESMRPEVASTFK. A helical membrane pass occupies residues 186 to 204; that stretch reads VLRNVTVVLWSAYPVVWLI. Topologically, residues 205–216 are extracellular; it reads GSEGAGIVPLNI. Residues 217 to 236 traverse the membrane as a helical segment; that stretch reads ETLLFMVLDVSAKVGFGLIL. Residue Lys229 is modified to N6-(retinylidene)lysine. Residues 237–262 lie on the Cytoplasmic side of the membrane; the sequence is LRSRAIFGEAEAPEPSAGDGAAATSD.

Homotrimer. Post-translationally, the covalent binding of retinal to the apoprotein, bacterioopsin, generates bacteriorhodopsin.

The protein resides in the cell membrane. Its function is as follows. Light-driven proton pump. In Halobacterium salinarum (strain ATCC 700922 / JCM 11081 / NRC-1) (Halobacterium halobium), this protein is Bacteriorhodopsin (bop).